Here is a 248-residue protein sequence, read N- to C-terminus: MGGSTSKNSFKNTTNIISNSIFNQMQNCISMLDGKNYIGVFGDGNILNHVFQDLNLSLDTSCVQKHVNEENFITNLSNQITQNLKDQEVALTQWMDAGHHDQKTDIEENIKVNLTTTLIQNCVSSLSGMNVLVVKGNGNIVENATQKQSQQIISNCLQGSKQAIDTTTGITNTVNQYSHYTSKNFFDFIADAISAVFKNIMVAAVVIVLIIVGFIAVFYFLHSRHRHEEEEEAEPLISNKVLKNAAVS.

Glycine 2 carries N-myristoyl glycine; by host lipidation. Residues 2–199 are Cytoplasmic-facing; sequence GGSTSKNSFK…ADAISAVFKN (198 aa). The chain crosses the membrane as a helical span at residues 200–220; that stretch reads IMVAAVVIVLIIVGFIAVFYF. The Extracellular segment spans residues 221–248; the sequence is LHSRHRHEEEEEAEPLISNKVLKNAAVS.

Belongs to the asfivirus E248R family. In terms of assembly, interacts with A151R.

The protein resides in the host membrane. Its subcellular location is the virion membrane. Its function is as follows. Essential for viral fusion with host endosomal membrane and core release. The polypeptide is Inner membrane protein pE248R (African swine fever virus (strain Badajoz 1971 Vero-adapted) (Ba71V)).